The following is a 406-amino-acid chain: MDGWRRMPRWGLLLLLWGSCTFGLPTDTTTFKRIFLKRMPSIRESLKERGVDMARLGPEWSQPMKRLALGNTTSSVILTNYMDTQYYGEIGIGTPPQTFKVVFDTGSSNVWVPSSKCSRLYTACVYHKLFDASDSSSYKHNGTELTLRYSTGTVSGFLSQDIITVGGITVTQMFGEVTEMPALPFMLAEFDGVVGMGFIEQAIGRVTPIFDNILSQGVLKEDVFSFYYNRDSENAQSLGGQIVLGGSDPQHYEGNFHYINLIKTGVWQIPMKGVSVGSSTLLCEDGCLALVDTGASYISGSTSSIEKLMEALGAKKRLFDYVVKCNEGPTLPDISFHLGGKEYTLTSADYVFQESYSSKKLCTLAIHAMDIPPPTGPTWALGATFIRKFYTEFDRRNNRIGFALAH.

The signal sequence occupies residues 1-23; that stretch reads MDGWRRMPRWGLLLLLWGSCTFG. Residues 24–66 constitute a propeptide, activation peptide; it reads LPTDTTTFKRIFLKRMPSIRESLKERGVDMARLGPEWSQPMKR. The N-linked (GlcNAc...) asparagine glycan is linked to asparagine 71. Residues 86–403 enclose the Peptidase A1 domain; the sequence is YYGEIGIGTP…DRRNNRIGFA (318 aa). Aspartate 104 is an active-site residue. Cysteine 117 and cysteine 124 are joined by a disulfide. Residue asparagine 141 is glycosylated (N-linked (GlcNAc...) asparagine). Cysteine 283 and cysteine 287 are joined by a disulfide. Aspartate 292 is an active-site residue. Residues cysteine 325 and cysteine 362 are joined by a disulfide bond.

It belongs to the peptidase A1 family. In terms of assembly, interacts with ATP6AP2.

The protein resides in the secreted. It is found in the membrane. It catalyses the reaction Cleavage of Leu-|-Xaa bond in angiotensinogen to generate angiotensin I.. With respect to regulation, interaction with ATP6AP2 results in a 5-fold increased efficiency in angiotensinogen processing. Renin is a highly specific endopeptidase, whose only known function is to generate angiotensin I from angiotensinogen in the plasma, initiating a cascade of reactions that produce an elevation of blood pressure and increased sodium retention by the kidney. This chain is Renin (REN), found in Macaca mulatta (Rhesus macaque).